Here is a 279-residue protein sequence, read N- to C-terminus: tRNA (guanine-N(1)-)-methyltransferase (279 aa).

Residues glycine 117 and 141-146 (LGDYVL) each bind S-adenosyl-L-methionine. Residues 256 to 279 (WTPDGSGFRAGGDPVADSSDTNEP) form a disordered region.

This sequence belongs to the RNA methyltransferase TrmD family. Homodimer.

It is found in the cytoplasm. It catalyses the reaction guanosine(37) in tRNA + S-adenosyl-L-methionine = N(1)-methylguanosine(37) in tRNA + S-adenosyl-L-homocysteine + H(+). Specifically methylates guanosine-37 in various tRNAs. The polypeptide is tRNA (guanine-N(1)-)-methyltransferase (Kineococcus radiotolerans (strain ATCC BAA-149 / DSM 14245 / SRS30216)).